A 293-amino-acid polypeptide reads, in one-letter code: Pyridoxal 5'-phosphate synthase subunit PdxS (293 aa).

D-ribose 5-phosphate is bound at residue aspartate 25. The active-site Schiff-base intermediate with D-ribose 5-phosphate is the lysine 82. Glycine 154 is a D-ribose 5-phosphate binding site. Arginine 166 lines the D-glyceraldehyde 3-phosphate pocket. D-ribose 5-phosphate is bound by residues glycine 215 and 236–237; that span reads GS.

It belongs to the PdxS/SNZ family. In the presence of PdxT, forms a dodecamer of heterodimers.

The catalysed reaction is aldehydo-D-ribose 5-phosphate + D-glyceraldehyde 3-phosphate + L-glutamine = pyridoxal 5'-phosphate + L-glutamate + phosphate + 3 H2O + H(+). Its pathway is cofactor biosynthesis; pyridoxal 5'-phosphate biosynthesis. Functionally, catalyzes the formation of pyridoxal 5'-phosphate from ribose 5-phosphate (RBP), glyceraldehyde 3-phosphate (G3P) and ammonia. The ammonia is provided by the PdxT subunit. Can also use ribulose 5-phosphate and dihydroxyacetone phosphate as substrates, resulting from enzyme-catalyzed isomerization of RBP and G3P, respectively. The sequence is that of Pyridoxal 5'-phosphate synthase subunit PdxS from Thermotoga petrophila (strain ATCC BAA-488 / DSM 13995 / JCM 10881 / RKU-1).